Here is a 943-residue protein sequence, read N- to C-terminus: Isoleucine--tRNA ligase (943 aa).

The short motif at 58 to 68 (PYANGSIHIGH) is the 'HIGH' region element. E567 contacts L-isoleucyl-5'-AMP. A 'KMSKS' region motif is present at residues 608–612 (KMSKS). Residue K611 coordinates ATP. 4 residues coordinate Zn(2+): C906, C909, C926, and C929.

It belongs to the class-I aminoacyl-tRNA synthetase family. IleS type 1 subfamily. As to quaternary structure, monomer. Zn(2+) serves as cofactor.

The protein localises to the cytoplasm. It catalyses the reaction tRNA(Ile) + L-isoleucine + ATP = L-isoleucyl-tRNA(Ile) + AMP + diphosphate. Functionally, catalyzes the attachment of isoleucine to tRNA(Ile). As IleRS can inadvertently accommodate and process structurally similar amino acids such as valine, to avoid such errors it has two additional distinct tRNA(Ile)-dependent editing activities. One activity is designated as 'pretransfer' editing and involves the hydrolysis of activated Val-AMP. The other activity is designated 'posttransfer' editing and involves deacylation of mischarged Val-tRNA(Ile). The chain is Isoleucine--tRNA ligase from Ectopseudomonas mendocina (strain ymp) (Pseudomonas mendocina).